A 166-amino-acid chain; its full sequence is NADPH-dependent 7-cyano-7-deazaguanine reductase (166 aa).

The active-site Thioimide intermediate is the Cys-57. Asp-64 functions as the Proton donor in the catalytic mechanism. Substrate is bound by residues 79 to 81 and 98 to 99; these read VES and HE.

This sequence belongs to the GTP cyclohydrolase I family. QueF type 1 subfamily.

Its subcellular location is the cytoplasm. It catalyses the reaction 7-aminomethyl-7-carbaguanine + 2 NADP(+) = 7-cyano-7-deazaguanine + 2 NADPH + 3 H(+). It functions in the pathway tRNA modification; tRNA-queuosine biosynthesis. Catalyzes the NADPH-dependent reduction of 7-cyano-7-deazaguanine (preQ0) to 7-aminomethyl-7-deazaguanine (preQ1). This is NADPH-dependent 7-cyano-7-deazaguanine reductase from Staphylococcus aureus (strain JH1).